The sequence spans 420 residues: Mannose-1-phosphate guanylyltransferase regulatory subunit alpha (420 aa).

Residues 2–251 (LKAVILIGGP…DGIWSQIKSA (250 aa)) are substrate-binding domain. Residues E85 and Q247 each contribute to the GDP-alpha-D-mannose site. Positions 273 to 420 (LARHTAGGPR…SRSFTNQIIL (148 aa)) are hexapeptide repeat domain. Residues 356-384 (TPNDPNPNDPRARMDSESLFKDGKLLPAI) form a C-loop region.

This sequence belongs to the transferase hexapeptide repeat family. In terms of assembly, component of the GMPPA-GMPPB mannose-1-phosphate guanylyltransferase complex composed of 4 GMPPA subunits and 8 GMPPB subunits; the complex is organized into three layers, a central layer made up of 2 GMPPA dimers sandwiched between two layers each made up of 2 GMPPB dimers.

The protein resides in the cytoplasm. Regulatory subunit of the GMPPA-GMPPB mannose-1-phosphate guanylyltransferase complex; reduces the catalytic activity of GMPPB when part of the complex. Mediates allosteric feedback inhibition of GMPPB catalytic activity upon binding GDP-alpha-D-mannose. Together with GMPPB regulates GDP-alpha-D-mannose levels. The sequence is that of Mannose-1-phosphate guanylyltransferase regulatory subunit alpha (Gmppa) from Rattus norvegicus (Rat).